Here is a 519-residue protein sequence, read N- to C-terminus: Importin subunit alpha-5 (519 aa).

Positions 1 to 58 (MSLRPSTKTEIRRIRYKVSVDAEEGRRRREDFLVEIRKSKRNENLMKKRRVKVLPPDY) constitute an IBB domain. 8 ARM repeats span residues 103 to 143 (SPPT…NIAS), 146 to 185 (SEHT…NVAG), 188 to 228 (IQCR…NFFR), 230 to 269 (KPSP…NLSD), 272 to 311 (NENI…NIVS), 314 to 354 (SQQT…NITA), 357 to 396 (EEQI…NASV), and 400 to 439 (PNQI…MILI).

Belongs to the importin alpha family. In terms of assembly, forms a complex with importin subunit beta-1.

It is found in the nucleus envelope. Binds to conventional NLS motifs and mediates nuclear protein import across the nuclear envelope. In Arabidopsis thaliana (Mouse-ear cress), this protein is Importin subunit alpha-5.